The sequence spans 145 residues: D-aminoacyl-tRNA deacylase (145 aa).

A Gly-cisPro motif, important for rejection of L-amino acids motif is present at residues 137 to 138 (GP).

The protein belongs to the DTD family. In terms of assembly, homodimer.

The protein resides in the cytoplasm. It carries out the reaction glycyl-tRNA(Ala) + H2O = tRNA(Ala) + glycine + H(+). The catalysed reaction is a D-aminoacyl-tRNA + H2O = a tRNA + a D-alpha-amino acid + H(+). An aminoacyl-tRNA editing enzyme that deacylates mischarged D-aminoacyl-tRNAs. Also deacylates mischarged glycyl-tRNA(Ala), protecting cells against glycine mischarging by AlaRS. Acts via tRNA-based rather than protein-based catalysis; rejects L-amino acids rather than detecting D-amino acids in the active site. By recycling D-aminoacyl-tRNA to D-amino acids and free tRNA molecules, this enzyme counteracts the toxicity associated with the formation of D-aminoacyl-tRNA entities in vivo and helps enforce protein L-homochirality. The protein is D-aminoacyl-tRNA deacylase of Pseudomonas aeruginosa (strain LESB58).